A 201-amino-acid chain; its full sequence is Receptor expression-enhancing protein 1 (201 aa).

The next 2 membrane-spanning stretches (helical) occupy residues 1–21 and 35–55; these read MVSW…YPAY and YVKW…ETFT. The residue at position 152 (Ser152) is a Phosphoserine. Residues 158–201 are disordered; it reads TIRGDGAPAPSGPPPPGTGRSSGKHSQPKMSRSASESAGSSGTA. Over residues 188 to 201 the composition is skewed to low complexity; that stretch reads SRSASESAGSSGTA.

This sequence belongs to the DP1 family. Interacts with OLFR992. Interacts with SPAST and ATL1. Interacts (via C-terminus) with microtubules. Interacts with ZFYVE27. Detected in olfactory sensory neurons of the olfactory epithelium, and in total brain.

It is found in the membrane. It localises to the mitochondrion membrane. The protein resides in the endoplasmic reticulum. In terms of biological role, required for endoplasmic reticulum (ER) network formation, shaping and remodeling; it links ER tubules to the cytoskeleton. May also enhance the cell surface expression of odorant receptors. This Mus musculus (Mouse) protein is Receptor expression-enhancing protein 1 (Reep1).